A 104-amino-acid polypeptide reads, in one-letter code: Large ribosomal subunit protein uL24 (104 aa).

This sequence belongs to the universal ribosomal protein uL24 family. As to quaternary structure, part of the 50S ribosomal subunit.

Functionally, one of two assembly initiator proteins, it binds directly to the 5'-end of the 23S rRNA, where it nucleates assembly of the 50S subunit. One of the proteins that surrounds the polypeptide exit tunnel on the outside of the subunit. This Caulobacter vibrioides (strain ATCC 19089 / CIP 103742 / CB 15) (Caulobacter crescentus) protein is Large ribosomal subunit protein uL24.